A 56-amino-acid chain; its full sequence is Alpha-conotoxin Pn1.2 (56 aa).

The signal sequence occupies residues 1–16 (MFTVFLLVVLATTVVS). A propeptide spanning residues 17 to 39 (FTSDRASDGGNAAMSDLIALTIK) is cleaved from the precursor. Intrachain disulfides connect Cys41–Cys47 and Cys42–Cys55. The tract at residues 43–45 (SHP) is ser-Xaa-Pro motif, crucial for potent interaction with nAChR. Cys55 carries the post-translational modification Cysteine amide.

Belongs to the conotoxin A superfamily. Post-translationally, non-native isomers 'ribbon' (with disulfide connectivity C1-C4; C2-C3) and 'beads' (with disulfide connectivity C1-C2; C3-C4) also inhibit high voltage-activated (HVA) calcium channel currents in rat DRG neurons (20-30% inhibition at 1 uM toxin). Expressed by the venom duct.

The protein localises to the secreted. Functionally, alpha-conotoxins act on postsynaptic membranes, they bind to the nicotinic acetylcholine receptors (nAChR) and thus inhibit them. This toxin inhibits human alpha-7/CHRNA7 and alpha-9-alpha-10/CHRNA9/CHRNA10 AChR (complete inhibition at 3 uM of toxin). In addition, this toxin inhibits high voltage-activated (HVA) calcium channel currents in rat DRG neurons (22% inhibition at 1 uM toxin) probably by activating GABA(B) receptors (GABBR1 and/or GABBR2). This chain is Alpha-conotoxin Pn1.2, found in Conus pennaceus (Feathered cone).